We begin with the raw amino-acid sequence, 513 residues long: MSVSIVLQPGQVTLAQWRALYRGAEVALDDACAAAVLRSAQTVEAIVARGEPVYGVNTGFGKLASVRIEREDLQALQRNIVLSHAAGVGEPTPVPVVRLMMALKLTSLAQGASGVQPDTLALLDAMLRAGITPVVPCQGSVGASGDLAPLSHLAAAMIGVGEAFVGAQRLPAADALAHAQLQPRVLGAKEGLALLNGTQFSTACALAGLFEIETVLQAALVTGALSVEAAKGSDTPFDARIHALRGQPGQIATAAALRALMADSAIRESHRLGDVRVQDPYCLRCQPQVMGAALDVMRQAARTLEIEANGVSDNPLVFSDTGEALSGGNFHAEPVAFAADMLAMAVCEIGSISERRTAMLVDPALSGLPAFLTPRPGLNSGFMIPQVTAAALVSENKQRAYPASVDSIPTSANQEDHVSMAAHGARRLLAMAENAAHVIGIELLAAVQGCDFHAPLRSSTALEAARALLRAQVPTLQDDRYFHPDMLAASALVRSGALAQTVAIPLPGVEQDV.

A cross-link (5-imidazolinone (Ala-Gly)) is located at residues 143-145 (ASG). Ser-144 bears the 2,3-didehydroalanine (Ser) mark.

It belongs to the PAL/histidase family. Post-translationally, contains an active site 4-methylidene-imidazol-5-one (MIO), which is formed autocatalytically by cyclization and dehydration of residues Ala-Ser-Gly.

It localises to the cytoplasm. The catalysed reaction is L-histidine = trans-urocanate + NH4(+). The protein operates within amino-acid degradation; L-histidine degradation into L-glutamate; N-formimidoyl-L-glutamate from L-histidine: step 1/3. In Xanthomonas axonopodis pv. citri (strain 306), this protein is Histidine ammonia-lyase.